The sequence spans 61 residues: Ubiquinol-cytochrome c reductase complex assembly factor 6 (61 aa).

Topologically, residues 1-9 (MPAGVSWGQ) are mitochondrial matrix. The chain crosses the membrane as a helical span at residues 10 to 32 (YLKFLGCALASMMAGSQAVHLYY). Over 33-61 (KPLEDLRVYIEQEQHSTQVDPTAKPPESA) the chain is Mitochondrial intermembrane.

This sequence belongs to the UQCC6 family. Interacts with sloth1; the interaction stabilizes both components. Expressed in the brain.

It is found in the mitochondrion inner membrane. The protein resides in the mitochondrion. In terms of biological role, required for the assembly and stability of the mitochondrial ubiquinol-cytochrome c reductase complex (complex III (CIII) or cytochrome b-c1 complex), a multisubunit transmembrane complex that is part of the mitochondrial electron transport chain (ETC) which drives oxidative phosphorylation. This chain is Ubiquinol-cytochrome c reductase complex assembly factor 6, found in Drosophila melanogaster (Fruit fly).